A 327-amino-acid polypeptide reads, in one-letter code: MQFIDQANIILKAGKGGNGIVSFRREKFVPAGGPSGGNGGKGGSIILVADNNLQTLLDFKFNREIFAKDGFKGGPNKRSGASGENTILKVPCGTEVRDVHTGIILGDLTIDKQSLTIAHGGRGGHGNAYYLSNQNRAPESFTEGQEGEIWEVQLELKLLAEVGIIGLPNAGKSTLISVLSSARPKIANYPFTTLIPNLGVVRKADGNGCLFADIPGLISGAAEGVGLGHDFLRHIQRTKILIHVIDSIAENPIHDFEIIEKELKQYGNGLLEKERIIVLNKKELIDENYLKIIIKKLENLSKKKVLVISSALREGLPSLLSEVWNRI.

Residues 1 to 159 (MQFIDQANII…WEVQLELKLL (159 aa)) form the Obg domain. The OBG-type G domain maps to 160-327 (AEVGIIGLPN…SLLSEVWNRI (168 aa)). Residues 166-173 (GLPNAGKS), 191-195 (FTTLI), 213-216 (DIPG), 280-283 (NKKE), and 309-311 (SSA) each bind ATP. 2 residues coordinate Mg(2+): Ser-173 and Thr-193.

This sequence belongs to the TRAFAC class OBG-HflX-like GTPase superfamily. OBG GTPase family. Monomer. Mg(2+) serves as cofactor.

It is found in the cytoplasm. In terms of biological role, an essential GTPase which binds GTP, GDP and possibly (p)ppGpp with moderate affinity, with high nucleotide exchange rates and a fairly low GTP hydrolysis rate. Plays a role in control of the cell cycle, stress response, ribosome biogenesis and in those bacteria that undergo differentiation, in morphogenesis control. This chain is GTPase Obg, found in Prochlorococcus marinus (strain MIT 9515).